The chain runs to 569 residues: MTQHWPAGEIARMILDGFDDYREHFRRITLGARERFEQARWQDIQRAAAARINLYEQKVGEVNGWLRDGFDEEVLLEVEQWPLVKSAYIRLIDPRLDDELAETWYNSLFCSLFSHDQISDGCMFIHTTRPSIRSHERAAQTRTYMPDGSLKGLVRAIFRDYAFDYGDLESDLSRLEEQLRDCLPDWVCKDPALAVELFVPVLYRNKGAYLVGRLYNSDEQWPLVIPLLHREGHGIEADALITDEAEVSIIFSFTRSYFMVDVPVPAEFVNFLKRILPGKHIAELYTSIGFYKHGKSEFYRALINHLASTDDRFIMAPGVRGMVMSVFTLPGFNTVFKIIKDRFSPSKTVDRATVIDKYRLVKSVDRVGRMADTQEFADFRFPRGKFEPECLAELLEVAPSTVAVEGDTVLVRHCWTERRMIPLNLYLEQASEGQVLEALEDYGLAIKQLAAANIFPGDMLLKNFGVTRHGRVVFYDYDEISYLTEVNFRHIPPPRYPEDEMSGEPWYSIGPHDVFPEEFPPFLFADMGQRRLFSRLHGELYDADYWKGLQASIREGKVIDVFPYRRKGR.

Residues 316 to 322 (APGVRGM) and K337 contribute to the ATP site. D372 is an active-site residue.

The protein belongs to the AceK family.

The protein resides in the cytoplasm. The enzyme catalyses L-seryl-[isocitrate dehydrogenase] + ATP = O-phospho-L-seryl-[isocitrate dehydrogenase] + ADP + H(+). Functionally, bifunctional enzyme which can phosphorylate or dephosphorylate isocitrate dehydrogenase (IDH) on a specific serine residue. This is a regulatory mechanism which enables bacteria to bypass the Krebs cycle via the glyoxylate shunt in response to the source of carbon. When bacteria are grown on glucose, IDH is fully active and unphosphorylated, but when grown on acetate or ethanol, the activity of IDH declines drastically concomitant with its phosphorylation. In Pseudomonas putida (strain W619), this protein is Isocitrate dehydrogenase kinase/phosphatase.